A 190-amino-acid chain; its full sequence is Segregation and condensation protein B (190 aa).

It belongs to the ScpB family. As to quaternary structure, homodimer. Homodimerization may be required to stabilize the binding of ScpA to the Smc head domains. Component of a cohesin-like complex composed of ScpA, ScpB and the Smc homodimer, in which ScpA and ScpB bind to the head domain of Smc. The presence of the three proteins is required for the association of the complex with DNA.

It is found in the cytoplasm. Participates in chromosomal partition during cell division. May act via the formation of a condensin-like complex containing Smc and ScpA that pull DNA away from mid-cell into both cell halves. This chain is Segregation and condensation protein B, found in Bacillus cereus (strain ATCC 10987 / NRS 248).